Here is a 490-residue protein sequence, read N- to C-terminus: GTPase Der (490 aa).

EngA-type G domains lie at 3–166 and 203–376; these read PVVA…MEDL and IKLA…DSST. Residues 9-16, 56-60, 118-121, 209-216, 256-260, and 321-324 contribute to the GTP site; these read GRPNVGKS, DTGGI, NKTD, DTAGV, and NKWD. The KH-like domain maps to 377–461; that stretch reads RRVGTSMLTR…PIRIQFKEGE (85 aa).

The protein belongs to the TRAFAC class TrmE-Era-EngA-EngB-Septin-like GTPase superfamily. EngA (Der) GTPase family. In terms of assembly, associates with the 50S ribosomal subunit.

Its function is as follows. GTPase that plays an essential role in the late steps of ribosome biogenesis. The polypeptide is GTPase Der (Escherichia coli O17:K52:H18 (strain UMN026 / ExPEC)).